Reading from the N-terminus, the 654-residue chain is Amyloid beta precursor like protein 1 (654 aa).

Positions 1–38 (MGPTSPAARGQGRRWRPPPLPLLLPLSLLLLRAQLAVG) are cleaved as a signal peptide. Residues 39-584 (NLAVGSPSAA…APSGTGVSRE (546 aa)) are Extracellular-facing. The interval 50–146 (APGSAQVAGL…PFHCLPGEFV (97 aa)) is GFLD subdomain. Residues 50-212 (APGSAQVAGL…RGVEYVCCPP (163 aa)) form the E1 domain. 6 cysteine pairs are disulfide-bonded: C60/C84, C95/C140, C120/C128, C156/C210, C167/C197, and C181/C209. Positions 154 to 212 (EGCRFLHQERMDQCESSTRRHQEAQEACSSQGLILHGSGMLLPCGSDRFRGVEYVCCPP) are cuBD subdomain. Cu(2+) is bound at residue H174. Zn(2+) is bound by residues E206, C209, and C210. The interval 214–297 (ATPNPSGMAA…VTPTPRPTDG (84 aa)) is disordered. Residues 262-272 (QAEEEEEEEEE) are compositionally biased toward acidic residues. Positions 297–488 (GVDVYFGMPG…QELRPQIQEL (192 aa)) constitute an E2 domain. Heparin-binding regions lie at residues 314–346 (FLRA…SKNL) and 414–445 (LMAL…DPEK). Residues 446–463 (AQQMRFQVQTHLQVIEER) form a collagen-binding region. N465 carries N-linked (GlcNAc...) asparagine glycosylation. The disordered stretch occupies residues 497 to 580 (SELDASVPGS…RDELAPSGTG (84 aa)). The segment covering 508-523 (SEDKGSLQPPESKDDP) has biased composition (basic and acidic residues). Residues 529–539 (KGSTDQESSSS) show a composition bias toward polar residues. A glycan (N-linked (GlcNAc...) asparagine) is linked at N555. H565 is a binding site for Cu(2+). H565 provides a ligand contact to Zn(2+). A helical transmembrane segment spans residues 585 to 607 (ALSGLLIMGAGGGSLIVLSLLLL). The short motif at 608 to 619 (RKKKPYGTISHG) is the Basolateral sorting signal element. The Cytoplasmic portion of the chain corresponds to 608–654 (RKKKPYGTISHGVVEVDPMLTLEEQQLRELQRHGYENPTYRFLEERP). Residues 636–652 (ELQRHGYENPTYRFLEE) are interaction with DAB1. An interaction with DAB2 region spans residues 640–654 (HGYENPTYRFLEERP). Positions 644–647 (NPTY) match the NPXY motif; contains endocytosis signal motif.

This sequence belongs to the APP family. As to quaternary structure, monomer and homodimer. Heparin binding promotes homodimerization. Binds, via its C-terminus, to the PID domain of several cytoplasmic proteins, including APBB and APBA family members, MAPK8IP1 and DAB1. Binding to Dab1 inhibits its serine phosphorylation. Interacts with CPEB1. Interacts (via NPXY motif) with DAB2 (via PID domain); the interaction is impaired by tyrosine phosphorylation of the NPXY motif. Interacts (via NPXY motif) with DAB1. In terms of processing, proteolytically cleaved by caspases during neuronal apoptosis. Cleaved, in vitro, at Asp-624 by caspase-3. Post-translationally, N- and O-glycosylated.

It localises to the cell membrane. It is found in the cytoplasm. In terms of biological role, may play a role in postsynaptic function. The C-terminal gamma-secretase processed fragment, ALID1, activates transcription activation through APBB1 (Fe65) binding. Couples to JIP signal transduction through C-terminal binding. May interact with cellular G-protein signaling pathways. Can regulate neurite outgrowth through binding to components of the extracellular matrix such as heparin and collagen I. Functionally, the gamma-CTF peptide, C30, is a potent enhancer of neuronal apoptosis. The chain is Amyloid beta precursor like protein 1 (Aplp1) from Mus musculus (Mouse).